Consider the following 332-residue polypeptide: Malate dehydrogenase, cytoplasmic (332 aa).

Residues 16–17 (QI), Asp43, and Gly90 contribute to the NAD(+) site. Arg99 is an oxaloacetate binding site. Positions 113 and 132 each coordinate NAD(+). Oxaloacetate-binding residues include Asn132, Arg163, His188, and Ser243. Residue His188 is the Proton acceptor of the active site.

It belongs to the LDH/MDH superfamily. MDH type 2 family. Monomer. Expressed constitutively in roots.

The protein localises to the cell membrane. It carries out the reaction (S)-malate + NAD(+) = oxaloacetate + NADH + H(+). Functionally, malate dehydrogenase; catalyzes a reversible NAD-dependent dehydrogenase reaction involved in central metabolism and redox homeostasis. The polypeptide is Malate dehydrogenase, cytoplasmic (Zea mays (Maize)).